Consider the following 624-residue polypeptide: DNA mismatch repair protein MutL (624 aa).

Residues 360–396 form a disordered region; the sequence is GGNHFSQPAPRRETASTEPAVARERAPQPAYHSGSGY. The span at 369 to 385 shows a compositional bias: basic and acidic residues; sequence PRRETASTEPAVARERA.

The protein belongs to the DNA mismatch repair MutL/HexB family.

This protein is involved in the repair of mismatches in DNA. It is required for dam-dependent methyl-directed DNA mismatch repair. May act as a 'molecular matchmaker', a protein that promotes the formation of a stable complex between two or more DNA-binding proteins in an ATP-dependent manner without itself being part of a final effector complex. This is DNA mismatch repair protein MutL from Serratia proteamaculans (strain 568).